Here is a 74-residue protein sequence, read N- to C-terminus: Small ribosomal subunit protein eS17 (74 aa).

This sequence belongs to the eukaryotic ribosomal protein eS17 family.

The chain is Small ribosomal subunit protein eS17 from Aeropyrum pernix (strain ATCC 700893 / DSM 11879 / JCM 9820 / NBRC 100138 / K1).